Reading from the N-terminus, the 448-residue chain is Homogentisate 1,2-dioxygenase (448 aa).

Residue H302 is the Proton acceptor of the active site. H345 and E351 together coordinate Fe cation. The homogentisate site is built by Y360 and H381. H381 is a binding site for Fe cation.

The protein belongs to the homogentisate dioxygenase family. As to quaternary structure, hexamer; dimer of trimers. Fe cation serves as cofactor.

The catalysed reaction is homogentisate + O2 = 4-maleylacetoacetate + H(+). It participates in amino-acid degradation; L-phenylalanine degradation; acetoacetate and fumarate from L-phenylalanine: step 4/6. In terms of biological role, involved in the catabolism of homogentisate (2,5-dihydroxyphenylacetate or 2,5-OH-PhAc), a central intermediate in the degradation of phenylalanine and tyrosine. Catalyzes the oxidative ring cleavage of the aromatic ring of homogentisate to yield maleylacetoacetate. This Ralstonia pickettii (strain 12J) protein is Homogentisate 1,2-dioxygenase.